A 170-amino-acid polypeptide reads, in one-letter code: Cathelicidin antimicrobial peptide (170 aa).

Residues 1 to 30 (MKTQRHGPSLGRWSLVLLLLGLVMPLAIVA) form the signal peptide. A propeptide spans 31-131 (QVLSYQEAVL…DISCDKDNRR (101 aa)) (cathelin-like domain (CLD)). Cystine bridges form between cysteine 86–cysteine 97 and cysteine 108–cysteine 125. Positions 150–162 (LKKIGQKIKDFWG) are active core.

This sequence belongs to the cathelicidin family. In terms of assembly, monomer, homodimer or homotrimer (in vitro). Oligomerizes as tetra- or hexamer in solution (in vitro). Proteolytically cleaved by proteinase PRTN3 into antibacterial peptide LL-37. Proteolytically cleaved by cathepsin CTSG and neutrophil elastase ELANE. Post-translationally, resistant to proteolytic degradation in solution, and when bound to both zwitterionic (mimicking mammalian membranes) and negatively charged membranes (mimicking bacterial membranes). In terms of processing, after secretion onto the skin surface, the CAMP gene product is processed by a serine protease-dependent mechanism into multiple novel antimicrobial peptides distinct from and shorter than cathelicidin LL-37. These peptides show enhanced antimicrobial action, acquiring the ability to kill skin pathogens such as S.aureus, E.coli and C.albicans. These peptides have lost the ability to stimulate CXCL8/IL8 release from keratinocytes. The peptides act synergistically, killing bacteria at lower concentrations when present together, and maintain activity at increased salt condition.

Its subcellular location is the secreted. It is found in the vesicle. In terms of biological role, antimicrobial protein that is an integral component of the innate immune system. Binds to bacterial lipopolysaccharides (LPS). Acts via neutrophil N-formyl peptide receptors to enhance the release of CXCL2. Postsecretory processing generates multiple cathelicidin antimicrobial peptides with various lengths which act as a topical antimicrobial defense in sweat on skin. The unprocessed precursor form, cathelicidin antimicrobial peptide, inhibits the growth of Gram-negative E.coli and E.aerogenes with efficiencies comparable to that of the mature peptide LL-37 (in vitro). Functionally, antimicrobial peptide that is an integral component of the innate immune system. Binds to bacterial lipopolysaccharides (LPS). Causes membrane permeabilization by forming transmembrane pores (in vitro). Causes lysis of E.coli. Exhibits antimicrobial activity against Gram-negative bacteria such as P.aeruginosa, S.typhimurium, E.aerogenes, E.coli and P.syringae, Gram-positive bacteria such as L.monocytogenes, S.epidermidis, S.pyogenes and S.aureus, as well as vancomycin-resistant enterococci (in vitro). Exhibits antimicrobial activity against methicillin-resistant S.aureus, P.mirabilis, and C.albicans in low-salt media, but not in media containing 100 mM NaCl (in vitro). Forms chiral supramolecular assemblies with quinolone signal (PQS) molecules of P.aeruginosa, which may lead to interference of bacterial quorum signaling and perturbance of bacterial biofilm formation. May form supramolecular fiber-like assemblies on bacterial membranes. Induces cytokine and chemokine producation as well as TNF/TNFA and CSF2/GMCSF production in normal human keratinocytes. Exhibits hemolytic activity against red blood cells. Exhibits antimicrobial activity against E.coli and B.megaterium (in vitro). The chain is Cathelicidin antimicrobial peptide from Trachypithecus cristatus (Silvered leaf-monkey).